Reading from the N-terminus, the 154-residue chain is SsrA-binding protein (154 aa).

Residues 126-154 (GKKKYDKREDMKKKEAQREVERAFRERQK) form a disordered region. Basic and acidic residues predominate over residues 131–154 (DKREDMKKKEAQREVERAFRERQK).

It belongs to the SmpB family.

It is found in the cytoplasm. Required for rescue of stalled ribosomes mediated by trans-translation. Binds to transfer-messenger RNA (tmRNA), required for stable association of tmRNA with ribosomes. tmRNA and SmpB together mimic tRNA shape, replacing the anticodon stem-loop with SmpB. tmRNA is encoded by the ssrA gene; the 2 termini fold to resemble tRNA(Ala) and it encodes a 'tag peptide', a short internal open reading frame. During trans-translation Ala-aminoacylated tmRNA acts like a tRNA, entering the A-site of stalled ribosomes, displacing the stalled mRNA. The ribosome then switches to translate the ORF on the tmRNA; the nascent peptide is terminated with the 'tag peptide' encoded by the tmRNA and targeted for degradation. The ribosome is freed to recommence translation, which seems to be the essential function of trans-translation. The chain is SsrA-binding protein from Anoxybacillus flavithermus (strain DSM 21510 / WK1).